The primary structure comprises 422 residues: UPF0229 protein Spro_2732 (422 aa).

Residues 77–90 (PGNDHFVQNDRVER) are compositionally biased toward basic and acidic residues. The tract at residues 77 to 109 (PGNDHFVQNDRVERPQGGGGGGSGQGNASQDGE) is disordered. Residues 92 to 101 (QGGGGGGSGQ) are compositionally biased toward gly residues.

Belongs to the UPF0229 family.

The chain is UPF0229 protein Spro_2732 from Serratia proteamaculans (strain 568).